Here is a 297-residue protein sequence, read N- to C-terminus: ClpXP adapter protein SpxH (297 aa).

The protein belongs to the SpxH family. Interacts with Spx.

It is found in the cytoplasm. In terms of biological role, adapter protein required for efficient degradation of Spx by ClpXP under non-stress conditions. Interaction with Spx stabilizes Spx and exposes the C-terminus of Spx for recognition and proteolysis by ClpXP. This chain is ClpXP adapter protein SpxH, found in Bacillus cereus (strain ATCC 14579 / DSM 31 / CCUG 7414 / JCM 2152 / NBRC 15305 / NCIMB 9373 / NCTC 2599 / NRRL B-3711).